The primary structure comprises 251 residues: Probable inactive cytidine deaminase 4 (251 aa).

Residue 61 to 63 (NVE) participates in substrate binding. The active-site Proton donor is glutamate 76. In terms of domain architecture, CMP/dCMP-type deaminase spans 136–251 (EHCSHLKCRA…VFRCHKTAEN (116 aa)).

It belongs to the cytidine and deoxycytidylate deaminase family. As to quaternary structure, homodimer.

The sequence is that of Probable inactive cytidine deaminase 4 (CDA4) from Arabidopsis thaliana (Mouse-ear cress).